A 101-amino-acid chain; its full sequence is UPF0235 protein CJA_0091 (101 aa).

Belongs to the UPF0235 family.

This chain is UPF0235 protein CJA_0091, found in Cellvibrio japonicus (strain Ueda107) (Pseudomonas fluorescens subsp. cellulosa).